A 233-amino-acid polypeptide reads, in one-letter code: Pre-hexon-linking protein VIII (233 aa).

At threonine 64 the chain carries Phosphothreonine; by host. The propeptide occupies 112-163 (ARHSFRYKGRTEPYPSPAIKRVLIRGKGIQLNDEVTSPLGVRPDGVFQLGGS). Position 180 is a phosphoserine; by host (serine 180).

It belongs to the adenoviridae hexon-linking protein family. In terms of assembly, interacts with the peripentonal hexons as well as the hexons in the facets. Part of a complex composed of the core-capsid bridging protein, the endosome lysis protein VI and the hexon-linking protein VIII; these interactions bridge the virus core to the capsid. In terms of processing, cleaved by the viral protease during virion maturation. May cause the middle segment to be shed from the capsid.

The protein resides in the virion. Its subcellular location is the host nucleus. Its function is as follows. Structural component of the virion that acts as a cement protein on the capsid interior and which glue the peripentonal hexons and group-of-nine hexons together. The chain is Pre-hexon-linking protein VIII from Homo sapiens (Human).